The primary structure comprises 401 residues: Tyrosine--tRNA ligase (401 aa).

The short motif at 41–50 (PSRPDLHLGH) is the 'HIGH' region element. The short motif at 225 to 229 (KMSKS) is the 'KMSKS' region element. Lys228 provides a ligand contact to ATP. The 62-residue stretch at 334-395 (KNIVDLLVEI…GKRKFYRISG (62 aa)) folds into the S4 RNA-binding domain.

It belongs to the class-I aminoacyl-tRNA synthetase family. TyrS type 2 subfamily. Homodimer.

The protein resides in the cytoplasm. It catalyses the reaction tRNA(Tyr) + L-tyrosine + ATP = L-tyrosyl-tRNA(Tyr) + AMP + diphosphate + H(+). Functionally, catalyzes the attachment of tyrosine to tRNA(Tyr) in a two-step reaction: tyrosine is first activated by ATP to form Tyr-AMP and then transferred to the acceptor end of tRNA(Tyr). The polypeptide is Tyrosine--tRNA ligase (Thermotoga maritima (strain ATCC 43589 / DSM 3109 / JCM 10099 / NBRC 100826 / MSB8)).